The following is a 70-amino-acid chain: Small ribosomal subunit protein bS21 (70 aa).

The protein belongs to the bacterial ribosomal protein bS21 family.

This chain is Small ribosomal subunit protein bS21, found in Helicobacter hepaticus (strain ATCC 51449 / 3B1).